The chain runs to 193 residues: Large ribosomal subunit protein uL5 (193 aa).

It belongs to the universal ribosomal protein uL5 family. Part of the 50S ribosomal subunit; part of the 5S rRNA/L5/L18/L25 subcomplex. Contacts the 5S rRNA and the P site tRNA. Forms a bridge to the 30S subunit in the 70S ribosome.

In terms of biological role, this is one of the proteins that bind and probably mediate the attachment of the 5S RNA into the large ribosomal subunit, where it forms part of the central protuberance. In the 70S ribosome it contacts protein S13 of the 30S subunit (bridge B1b), connecting the 2 subunits; this bridge is implicated in subunit movement. Contacts the P site tRNA; the 5S rRNA and some of its associated proteins might help stabilize positioning of ribosome-bound tRNAs. The chain is Large ribosomal subunit protein uL5 from Arthrobacter sp. (strain FB24).